The chain runs to 400 residues: Probable peptidoglycan glycosyltransferase FtsW (400 aa).

Over 1–29 the chain is Cytoplasmic; it reads MVIERIKHLASPLQDWVFTPSPKVMFDRQ. A helical membrane pass occupies residues 30–50; sequence LIWIALGLMLTGLVMVASASF. At 51–60 the chain is on the periplasmic side; it reads PISTRLTGQP. Residues 61 to 81 traverse the membrane as a helical segment; sequence FHFMMRHMLFVFLALSISSIV. The Cytoplasmic portion of the chain corresponds to 82 to 95; sequence LRIELNKWLKYSSH. A helical membrane pass occupies residues 96-116; that stretch reads LLLISLLLLAAVLVVGKSVNG. Over 117 to 122 the chain is Periplasmic; that stretch reads AARWLP. The chain crosses the membrane as a helical span at residues 123–143; it reads LGIFNLQPAEVAKLSLFVFIA. Over 144-155 the chain is Cytoplasmic; sequence GYLVRRHGEVRD. The helical transmembrane segment at 156–176 threads the bilayer; it reads SFRGFVKPLLVLITLAFFLLM. Topologically, residues 177–178 are periplasmic; that stretch reads QP. A helical membrane pass occupies residues 179 to 199; it reads DLGTTVVMFVTTIAMLFIAGA. Lys200 is a topological domain (cytoplasmic). The chain crosses the membrane as a helical span at residues 201 to 221; the sequence is LWQFIALVMGGISLVIVLILA. Topologically, residues 222–290 are periplasmic; the sequence is EPYRMRRVTS…VFAVIAEELG (69 aa). Residues 291–311 traverse the membrane as a helical segment; that stretch reads FVGVCLVLCLIFALVFKALLI. Residues 312–321 are Cytoplasmic-facing; that stretch reads GRKCLAHDQR. Residues 322–342 traverse the membrane as a helical segment; sequence FGGFLAFGIGIWFAFQTLVNV. The Periplasmic segment spans residues 343–356; that stretch reads GAAAGIVPTKGLTL. Residues 357-377 traverse the membrane as a helical segment; sequence PLISYGGSSLIIMSVAVSLLI. At 378 to 400 the chain is on the cytoplasmic side; sequence RIDHECRVYLANEPPRSENEEQK.

The protein belongs to the SEDS family. FtsW subfamily.

The protein resides in the cell inner membrane. The enzyme catalyses [GlcNAc-(1-&gt;4)-Mur2Ac(oyl-L-Ala-gamma-D-Glu-L-Lys-D-Ala-D-Ala)](n)-di-trans,octa-cis-undecaprenyl diphosphate + beta-D-GlcNAc-(1-&gt;4)-Mur2Ac(oyl-L-Ala-gamma-D-Glu-L-Lys-D-Ala-D-Ala)-di-trans,octa-cis-undecaprenyl diphosphate = [GlcNAc-(1-&gt;4)-Mur2Ac(oyl-L-Ala-gamma-D-Glu-L-Lys-D-Ala-D-Ala)](n+1)-di-trans,octa-cis-undecaprenyl diphosphate + di-trans,octa-cis-undecaprenyl diphosphate + H(+). Its pathway is cell wall biogenesis; peptidoglycan biosynthesis. Its function is as follows. Peptidoglycan polymerase that is essential for cell division. The protein is Probable peptidoglycan glycosyltransferase FtsW of Aliivibrio salmonicida (strain LFI1238) (Vibrio salmonicida (strain LFI1238)).